Consider the following 420-residue polypeptide: Glutamyl-tRNA reductase (420 aa).

Substrate-binding positions include 49–52, S109, 114–116, and Q120; these read TCNR and EPQ. Catalysis depends on C50, which acts as the Nucleophile. Residue 189–194 coordinates NADP(+); the sequence is GAGETI.

This sequence belongs to the glutamyl-tRNA reductase family. As to quaternary structure, homodimer.

The enzyme catalyses (S)-4-amino-5-oxopentanoate + tRNA(Glu) + NADP(+) = L-glutamyl-tRNA(Glu) + NADPH + H(+). The protein operates within porphyrin-containing compound metabolism; protoporphyrin-IX biosynthesis; 5-aminolevulinate from L-glutamyl-tRNA(Glu): step 1/2. In terms of biological role, catalyzes the NADPH-dependent reduction of glutamyl-tRNA(Glu) to glutamate 1-semialdehyde (GSA). This chain is Glutamyl-tRNA reductase, found in Sodalis glossinidius (strain morsitans).